We begin with the raw amino-acid sequence, 383 residues long: Xylose/arabinose import ATP-binding protein XacK (383 aa).

Residues 4–240 enclose the ABC transporter domain; sequence LTLDDVTKVY…PNNLFVAGFI (237 aa). Residue 41–48 coordinates ATP; it reads GPSGCGKS.

This sequence belongs to the ABC transporter superfamily. Carbohydrate uptake transporter-1 (CUT1) (TC 3.A.1.1) family. As to quaternary structure, the complex is composed of two ATP-binding proteins (XacJ and XacK), two transmembrane proteins (XacH and XacI) and a solute-binding protein (XacG).

It localises to the cell membrane. It catalyses the reaction D-xylose(out) + ATP + H2O = D-xylose(in) + ADP + phosphate + H(+). The catalysed reaction is L-arabinose(out) + ATP + H2O = L-arabinose(in) + ADP + phosphate + H(+). Its function is as follows. Part of the ABC transporter complex XacGHIJK involved in the uptake of xylose and arabinose. Responsible for energy coupling to the transport system. The protein is Xylose/arabinose import ATP-binding protein XacK of Haloferax volcanii (strain ATCC 29605 / DSM 3757 / JCM 8879 / NBRC 14742 / NCIMB 2012 / VKM B-1768 / DS2) (Halobacterium volcanii).